Reading from the N-terminus, the 347-residue chain is Cytosolic sulfotransferase 14 (347 aa).

3'-phosphoadenylyl sulfate is bound at residue 87 to 92; that stretch reads KSGTTW. The active-site Proton acceptor is His-155. 3'-phosphoadenylyl sulfate is bound by residues Arg-177, Ser-185, Tyr-244, and 310–312; that span reads RKG.

Belongs to the sulfotransferase 1 family.

Its subcellular location is the cytoplasm. Its function is as follows. Sulfotransferase that utilizes 3'-phospho-5'-adenylyl sulfate (PAPS) as sulfonate donor. Not active with 11-hydroxyjasmonate or 12-hydroxyjasmonate. The protein is Cytosolic sulfotransferase 14 (SOT14) of Arabidopsis thaliana (Mouse-ear cress).